Reading from the N-terminus, the 529-residue chain is uncharacterized protein (529 aa).

Asp389 serves as the catalytic Nucleophile. Glu392 is an active-site residue. Asp459 (proton donor) is an active-site residue.

This sequence belongs to the glycosyl hydrolase 31 family.

This is an uncharacterized protein from Pseudescherichia vulneris (Escherichia vulneris).